The chain runs to 604 residues: Kinesin-like protein KIN-14O (604 aa).

A coiled-coil region spans residues 22 to 61 (MLNHDKDISALQEEISALRSRQRHLDHRRQEALDKLIDLK). The region spanning 63–387 (SIRVFCRVRP…LSFAKRARSI (325 aa)) is the Kinesin motor domain. Residue 141 to 148 (GQTGTGKT) coordinates ATP. The stretch at 383-443 (RARSIESSKE…EERKKLSSSA (61 aa)) forms a coiled coil. Disordered regions lie at residues 465–511 (DSAE…KTRL) and 565–604 (SNNS…SSLT). Over residues 565–574 (SNNSIDSTAA) the composition is skewed to polar residues. Over residues 593 to 604 (LHQHRRRMSSLT) the composition is skewed to basic residues.

It belongs to the TRAFAC class myosin-kinesin ATPase superfamily. Kinesin family. KIN-14 subfamily.

This Oryza sativa subsp. japonica (Rice) protein is Kinesin-like protein KIN-14O.